Consider the following 1106-residue polypeptide: Solute carrier family 12 member 7 (1106 aa).

Residues 1–143 (MVYTALTWQR…PRESKAPCMG (143 aa)) are Cytoplasmic-facing. Residues 17–83 (GLVPSHLPQE…SPFIGSAAAD (67 aa)) form a disordered region. 2 positions are modified to phosphoserine: Ser74 and Ser86. A discontinuously helical transmembrane segment spans residues 144–166 (TFIGVYLPCLQNILGVILFLRLT). K(+) contacts are provided by Asn155 and Ile156. Position 159 (Val159) interacts with chloride. At 167–173 (WIVGAAG) the chain is on the extracellular side. Residues 174-196 (VLESFLVVSMCCTCTMLTAVSMS) traverse the membrane as a helical segment. The Cytoplasmic portion of the chain corresponds to 197-220 (AIATNGVVPAGGSYYMISRSLGPE). A helical transmembrane segment spans residues 221–249 (FGGAVGLCFYLGTTFAGAMYILGTIEIFL). Topologically, residues 250–273 (TYISPGAAVFQAETPEGEAAALLH) are extracellular. 2 consecutive transmembrane segments (helical) span residues 274 to 295 (NMRV…VGVK) and 296 to 324 (YVNK…KTAF). The Extracellular portion of the chain corresponds to 325-443 (DPPDIPVCLL…PYVLSDITTY (119 aa)). Asn336, Asn355, and Asn384 each carry an N-linked (GlcNAc...) asparagine glycan. The chain crosses the membrane as a helical span at residues 444–464 (FTVLVGIYFPSVTGIMAGSNR). Positions 453 and 456 each coordinate K(+). Pro453 provides a ligand contact to chloride. Residues Gly457 and Ile458 each coordinate chloride. Topologically, residues 465–474 (SGDLKDAQKS) are cytoplasmic. The helical transmembrane segment at 475–497 (IPTGTILAIVTTSFIYLSCIVLF) threads the bilayer. Residues 498–528 (GACIEGVVLRDKFGEALQGNLVIGMLAWPSP) lie on the Extracellular side of the membrane. A helical membrane pass occupies residues 529–555 (WVIVIGSFFSTCGAGLQSLTGAPRLLQ). Residues 556 to 578 (AIARDGIVPFLQVFGHGKANGEP) lie on the Cytoplasmic side of the membrane. The next 2 membrane-spanning stretches (helical) occupy residues 579-597 (TWAL…LIAS) and 598-622 (LDSV…ACAV). Tyr613 contributes to the chloride binding site. Residues 623-636 (QTLLRTPNWRPRFK) are Cytoplasmic-facing. 2 consecutive transmembrane segments (helical) span residues 637–659 (YYHW…ICSW) and 660–675 (YYAL…IYKY). The Cytoplasmic portion of the chain corresponds to 676–1106 (IEYRGAEKEW…GGREVITIYS (431 aa)). The tract at residues 688 to 704 (GIRGLSLNAARYALLRV) is scissor helix. The tract at residues 980-999 (RNTASHTAASRAQAPPTPDK) is disordered. Thr996 and Thr1003 each carry phosphothreonine.

It belongs to the SLC12A transporter family. K/Cl co-transporter subfamily. In terms of assembly, homodimer; adopts a domain-swap conformation at the scissor helices connecting the transmembrane domain and C-terminal domain. Heterodimer with K-Cl cotransporter SLC12A5. Widely expressed. Higher levels in heart, kidney and lung (at protein level).

The protein localises to the cell membrane. It carries out the reaction K(+)(in) + chloride(in) = K(+)(out) + chloride(out). Its activity is regulated as follows. Activated by N-ethylmaleimide (NEM). Inhibited by furosemide, DIDS and bumetanide. The inhibition is much stronger in the presence of 50 mM K(+) in the uptake medium. Inhibited by DIOA. Inhibited by WNK3. Its function is as follows. Mediates electroneutral potassium-chloride cotransport when activated by cell swelling. May mediate K(+) uptake into Deiters' cells in the cochlea and contribute to K(+) recycling in the inner ear. Important for the survival of cochlear outer and inner hair cells and the maintenance of the organ of Corti. May be required for basolateral Cl(-) extrusion in the kidney and contribute to renal acidification. The polypeptide is Solute carrier family 12 member 7 (Oryctolagus cuniculus (Rabbit)).